Reading from the N-terminus, the 370-residue chain is Peptide chain release factor 2 (370 aa).

At Gln252 the chain carries N5-methylglutamine.

This sequence belongs to the prokaryotic/mitochondrial release factor family. Post-translationally, methylated by PrmC. Methylation increases the termination efficiency of RF2.

Its subcellular location is the cytoplasm. In terms of biological role, peptide chain release factor 2 directs the termination of translation in response to the peptide chain termination codons UGA and UAA. This is Peptide chain release factor 2 from Mycobacterium avium (strain 104).